The chain runs to 118 residues: Holo-[acyl-carrier-protein] synthase (118 aa).

Positions 8 and 58 each coordinate Mg(2+).

It belongs to the P-Pant transferase superfamily. AcpS family. Mg(2+) is required as a cofactor.

It is found in the cytoplasm. The enzyme catalyses apo-[ACP] + CoA = holo-[ACP] + adenosine 3',5'-bisphosphate + H(+). Its function is as follows. Transfers the 4'-phosphopantetheine moiety from coenzyme A to a Ser of acyl-carrier-protein. This is Holo-[acyl-carrier-protein] synthase from Lactobacillus helveticus (strain DPC 4571).